Consider the following 32-residue polypeptide: Apolipophorin-3 (32 aa).

The tract at residues 1-32 is disordered; it reads DAPSTTPPQDXEKKAAEFQKTFTEQXNQLANK. Residues 20-32 show a composition bias toward polar residues; sequence KTFTEQXNQLANK.

Belongs to the insect apolipophorin-3 family. Equilibrium between a soluble monomer and a bound lipoprotein form. Apolipophorin-3 associates with lipophorin during lipid loading until each particle contains 9 or 14 molecules of apolipophorin-3. In terms of tissue distribution, hemolymph.

The protein resides in the secreted. In terms of biological role, assists in the loading of diacylglycerol, generated from triacylglycerol stores in the fat body through the action of adipokinetic hormone, into lipophorin, the hemolymph lipoprotein. It increases the lipid carrying capacity of lipophorin by covering the expanding hydrophobic surface resulting from diacylglycerol uptake. It thus plays a critical role in the transport of lipids during flight in several species of insects. The chain is Apolipophorin-3 from Diatraea grandiosella (Southwestern corn borer).